Reading from the N-terminus, the 327-residue chain is Movement protein (327 aa).

Residues Ser-297 to Glu-327 adopt a coiled-coil conformation.

The protein belongs to the caulimoviridae movement protein family. As to quaternary structure, homotrimer, through the coiled-coil domain. Interacts with VAP. May interact (via N-terminus) with host prenylated Rab acceptor protein 1D (PRA1D).

Its subcellular location is the host cell junction. It is found in the host plasmodesma. Its function is as follows. Transports viral genome to neighboring plant cells directly through plasmosdesmata, without any budding. The movement protein allows efficient cell to cell propagation, by bypassing the host cell wall barrier. Acts by forming tubules structures that increase the size exclusion limit (SEL) of plasmodesmata, thereby allowing viral ribonucleocapsids to spread directly to neighboring cells. The protein is Movement protein of Arabidopsis thaliana (Mouse-ear cress).